Reading from the N-terminus, the 169-residue chain is Oleosin Cor a 15 (169 aa).

The next 2 membrane-spanning stretches (helical) occupy residues 38–58 (IAVV…GLTF) and 70–90 (PLFV…GLAV). The short motif at 70–81 (PLFVLCSPVLVP) is the Proline-knot element. 2 stretches are compositionally biased toward basic and acidic residues: residues 122–131 (QMEHAKRRAQ) and 160–169 (EGGRGEEKKT). The disordered stretch occupies residues 122–169 (QMEHAKRRAQDTAGHLGQKARETGQTVTGKGQEAGKTLEGGRGEEKKT).

It belongs to the oleosin family. In terms of tissue distribution, expressed in seeds (at protein level).

The protein resides in the lipid droplet. Its subcellular location is the membrane. Its function is as follows. May have a structural role to stabilize the lipid body during desiccation of the seed by preventing coalescence of the oil. Probably interacts with both lipid and phospholipid moieties of lipid bodies. May also provide recognition signals for specific lipase anchorage in lipolysis during seedling growth. This is Oleosin Cor a 15 from Corylus avellana (European hazel).